The following is a 328-amino-acid chain: Tetraacyldisaccharide 4'-kinase (328 aa).

55 to 62 (TAGGNGKT) contacts ATP.

Belongs to the LpxK family.

It catalyses the reaction a lipid A disaccharide + ATP = a lipid IVA + ADP + H(+). It participates in glycolipid biosynthesis; lipid IV(A) biosynthesis; lipid IV(A) from (3R)-3-hydroxytetradecanoyl-[acyl-carrier-protein] and UDP-N-acetyl-alpha-D-glucosamine: step 6/6. Transfers the gamma-phosphate of ATP to the 4'-position of a tetraacyldisaccharide 1-phosphate intermediate (termed DS-1-P) to form tetraacyldisaccharide 1,4'-bis-phosphate (lipid IVA). The protein is Tetraacyldisaccharide 4'-kinase of Yersinia pseudotuberculosis serotype I (strain IP32953).